The primary structure comprises 291 residues: Ribonuclease Z (291 aa).

Residues H61, H63, D65, H66, H133, D201, and H257 each coordinate Zn(2+). D65 functions as the Proton acceptor in the catalytic mechanism.

It belongs to the RNase Z family. Homodimer. Zn(2+) serves as cofactor.

It carries out the reaction Endonucleolytic cleavage of RNA, removing extra 3' nucleotides from tRNA precursor, generating 3' termini of tRNAs. A 3'-hydroxy group is left at the tRNA terminus and a 5'-phosphoryl group is left at the trailer molecule.. Functionally, zinc phosphodiesterase, which displays some tRNA 3'-processing endonuclease activity. Probably involved in tRNA maturation, by removing a 3'-trailer from precursor tRNA. This Saccharolobus islandicus (strain L.S.2.15 / Lassen #1) (Sulfolobus islandicus) protein is Ribonuclease Z.